We begin with the raw amino-acid sequence, 89 residues long: Large ribosomal subunit protein bL31B (89 aa).

The protein belongs to the bacterial ribosomal protein bL31 family. Type B subfamily. As to quaternary structure, part of the 50S ribosomal subunit.

The sequence is that of Large ribosomal subunit protein bL31B from Aeromonas salmonicida (strain A449).